The sequence spans 136 residues: Histone H3.1 (136 aa).

A disordered region spans residues 1–41 (MARTKQTARKSTGGKAPRKQLATKAARKSAPAAGGVKKPHR). Residue K5 is modified to N6,N6,N6-trimethyllysine; alternate. An N6,N6-dimethyllysine; alternate modification is found at K5. An N6-methyllysine; alternate mark is found at K5 and K10. Residue K10 is modified to N6-acetyllysine; alternate. A Phosphoserine modification is found at S11. K15 bears the N6,N6-dimethyllysine; alternate mark. Residues K15, K19, K24, K28, and K37 each carry the N6-acetyllysine; alternate modification. K19, K24, K28, and K37 each carry N6-methyllysine; alternate. Residues 22–33 (ATKAARKSAPAA) are compositionally biased toward low complexity. An N6,N6,N6-trimethyllysine; alternate mark is found at K28 and K37. K28 and K37 each carry N6,N6-dimethyllysine; alternate. Residues K57 and K65 each carry the N6-acetyllysine modification. K80 is modified (N6,N6,N6-trimethyllysine; alternate). K80 is subject to N6,N6-dimethyllysine; alternate. At K80 the chain carries N6-methyllysine; alternate.

This sequence belongs to the histone H3 family. The nucleosome is a histone octamer containing two molecules each of H2A, H2B, H3 and H4 assembled in one H3-H4 heterotetramer and two H2A-H2B heterodimers. The octamer wraps approximately 147 bp of DNA. Phosphorylated to form H3S10ph. H3S10ph promotes subsequent H3K14ac formation and is required for transcriptional activation through TBP recruitment to the promoters. Post-translationally, mono-, di- and trimethylated by the COMPASS complex to form H3K4me1/2/3. H3K4me activates gene expression by regulating transcription elongation and plays a role in telomere length maintenance. H3K4me enrichment correlates with transcription levels, and occurs in a 5' to 3' gradient with H3K4me3 enrichment at the 5'-end of genes, shifting to H3K4me2 and then H3K4me1. Methylated by SET2 to form H3K36me. H3K36me represses gene expression. Methylated by DOT1 to form H3K79me. H3K79me is required for association of SIR proteins with telomeric regions and for telomeric silencing. The COMPASS-mediated formation of H3K4me2/3 and the DOT1-mediated formation of H3K79me require H2BK123ub1. In terms of processing, acetylation of histone H3 leads to transcriptional activation. H3K14ac formation by GCN5 is promoted by H3S10ph. H3K14ac can also be formed by ESA1. H3K56ac formation occurs predominantly in newly synthesized H3 molecules during G1, S and G2/M of the cell cycle and may be involved in DNA repair.

The protein localises to the nucleus. It is found in the chromosome. In terms of biological role, core component of nucleosome. Nucleosomes wrap and compact DNA into chromatin, limiting DNA accessibility to the cellular machineries which require DNA as a template. Histones thereby play a central role in transcription regulation, DNA repair, DNA replication and chromosomal stability. DNA accessibility is regulated via a complex set of post-translational modifications of histones, also called histone code, and nucleosome remodeling. The polypeptide is Histone H3.1 (HHT1) (Mycosarcoma maydis (Corn smut fungus)).